Consider the following 139-residue polypeptide: Large-conductance mechanosensitive channel 1 (139 aa).

3 helical membrane passes run 8-28, 30-50, and 81-101; these read FISK…AAFG, IVDS…FGGL, and GSFI…FLMV.

Belongs to the MscL family. As to quaternary structure, homopentamer.

The protein localises to the cell inner membrane. Its function is as follows. Channel that opens in response to stretch forces in the membrane lipid bilayer. May participate in the regulation of osmotic pressure changes within the cell. The chain is Large-conductance mechanosensitive channel 1 from Mesorhizobium japonicum (strain LMG 29417 / CECT 9101 / MAFF 303099) (Mesorhizobium loti (strain MAFF 303099)).